Consider the following 345-residue polypeptide: UPF0284 protein STK_21430 (345 aa).

This sequence belongs to the UPF0284 family.

The chain is UPF0284 protein STK_21430 from Sulfurisphaera tokodaii (strain DSM 16993 / JCM 10545 / NBRC 100140 / 7) (Sulfolobus tokodaii).